Reading from the N-terminus, the 358-residue chain is Magnesium-protoporphyrin IX monomethyl ester [oxidative] cyclase (358 aa).

Belongs to the AcsF family. The cofactor is Fe cation.

The catalysed reaction is Mg-protoporphyrin IX 13-monomethyl ester + 3 NADPH + 3 O2 + 2 H(+) = 3,8-divinyl protochlorophyllide a + 3 NADP(+) + 5 H2O. It participates in porphyrin-containing compound metabolism; chlorophyll biosynthesis (light-independent). Functionally, catalyzes the formation of the isocyclic ring in chlorophyll biosynthesis. Mediates the cyclase reaction, which results in the formation of divinylprotochlorophyllide (Pchlide) characteristic of all chlorophylls from magnesium-protoporphyrin IX 13-monomethyl ester (MgPMME). This Synechococcus elongatus (strain ATCC 33912 / PCC 7942 / FACHB-805) (Anacystis nidulans R2) protein is Magnesium-protoporphyrin IX monomethyl ester [oxidative] cyclase.